Consider the following 376-residue polypeptide: N-acetyldiaminopimelate deacetylase (376 aa).

Residue aspartate 69 is part of the active site. Catalysis depends on glutamate 128, which acts as the Proton acceptor.

It belongs to the peptidase M20A family. N-acetyldiaminopimelate deacetylase subfamily.

It carries out the reaction N-acetyl-(2S,6S)-2,6-diaminopimelate + H2O = (2S,6S)-2,6-diaminopimelate + acetate. It functions in the pathway amino-acid biosynthesis; L-lysine biosynthesis via DAP pathway; LL-2,6-diaminopimelate from (S)-tetrahydrodipicolinate (acetylase route): step 3/3. In terms of biological role, catalyzes the conversion of N-acetyl-diaminopimelate to diaminopimelate and acetate. This chain is N-acetyldiaminopimelate deacetylase, found in Streptococcus pneumoniae (strain Taiwan19F-14).